Here is a 434-residue protein sequence, read N- to C-terminus: Histidinol dehydrogenase (434 aa).

Residues Ser242, Gln264, and His267 each contribute to the substrate site. Zn(2+) contacts are provided by Gln264 and His267. Active-site proton acceptor residues include Glu332 and His333. Residues His333, Asp366, Glu420, and His425 each contribute to the substrate site. Asp366 provides a ligand contact to Zn(2+). His425 is a binding site for Zn(2+).

Belongs to the histidinol dehydrogenase family. The cofactor is Zn(2+).

The catalysed reaction is L-histidinol + 2 NAD(+) + H2O = L-histidine + 2 NADH + 3 H(+). Its pathway is amino-acid biosynthesis; L-histidine biosynthesis; L-histidine from 5-phospho-alpha-D-ribose 1-diphosphate: step 9/9. Catalyzes the sequential NAD-dependent oxidations of L-histidinol to L-histidinaldehyde and then to L-histidine. The protein is Histidinol dehydrogenase of Oleidesulfovibrio alaskensis (strain ATCC BAA-1058 / DSM 17464 / G20) (Desulfovibrio alaskensis).